We begin with the raw amino-acid sequence, 237 residues long: Myelin protein zero-like protein 3 (237 aa).

The first 32 residues, 1-32 (MQLARGTVGGRGCALFPLLSILVVQGARIVLS), serve as a signal peptide directing secretion. The Ig-like V-type domain maps to 33–149 (LEISADAHVR…NIPLTELTVT (117 aa)). Topologically, residues 33–159 (LEISADAHVR…ERGFGTMLSS (127 aa)) are extracellular. C53 and C129 are oxidised to a cystine. N124 carries N-linked (GlcNAc...) asparagine glycosylation. The helical transmembrane segment at 160-180 (VALLSILVFVPSAVVVILLLV) threads the bilayer. The Cytoplasmic portion of the chain corresponds to 181-237 (RMGRKATGVQKRSRSGYKKSSIEVSDDTDQEDSNDCMTRLCVRCAECLDSDYEEEAY).

Belongs to the myelin P0 protein family. In terms of tissue distribution, present in all tissues tested, including the skin. Present in the keratinocytes and sebocytes in the skin (at protein level).

The protein localises to the membrane. Mediates homophilic cell-cell adhesion. This chain is Myelin protein zero-like protein 3 (Mpzl3), found in Mus musculus (Mouse).